Reading from the N-terminus, the 92-residue chain is Large ribosomal subunit protein eL43 (92 aa).

A C4-type zinc finger spans residues 39 to 60 (CDFCGKYGMKRKAVGIWSCKGC).

The protein belongs to the eukaryotic ribosomal protein eL43 family.

In Ostreococcus lucimarinus (strain CCE9901), this protein is Large ribosomal subunit protein eL43 (RPL37a).